A 134-amino-acid chain; its full sequence is Profilin (134 aa).

This sequence belongs to the profilin family. In terms of assembly, occurs in many kinds of cells as a complex with monomeric actin in a 1:1 ratio.

The protein localises to the cytoplasm. It is found in the cytoskeleton. Functionally, binds to actin and affects the structure of the cytoskeleton. At high concentrations, profilin prevents the polymerization of actin, whereas it enhances it at low concentrations. By binding to PIP2, it inhibits the formation of IP3 and DG. The protein is Profilin of Daucus carota (Wild carrot).